The sequence spans 117 residues: Calcitonin receptor-stimulating peptide 2 (117 aa).

The N-terminal stretch at 1 to 25 (MGFWKFPPFLVLSILVLYQAGMFHT) is a signal peptide. A propeptide spanning residues 26–79 (APVRLPLESSFDSATLTEEEVSLLLVAMVKDYVQMKATVLEQESEDFSITAQEK) is cleaved from the precursor. Cys81 and Cys86 are oxidised to a cystine.

Belongs to the calcitonin family. Mainly expressed in the thyroid gland and CNS. Found in the nerve cells of the cerebrum, hippocampus, hypothalamus, pons/midbrain and thalamus. Also detected in the glia-like cells of pons/midbrain and in meninx of tactus opticus.

Its subcellular location is the secreted. This chain is Calcitonin receptor-stimulating peptide 2 (CRSP2), found in Sus scrofa (Pig).